Consider the following 314-residue polypeptide: Aspartate carbamoyltransferase catalytic subunit (314 aa).

Carbamoyl phosphate-binding residues include Arg55 and Thr56. Lys83 serves as a coordination point for L-aspartate. Carbamoyl phosphate-binding residues include Arg105, His139, and Gln142. L-aspartate is bound by residues Arg172 and Arg226. Residues Gly267 and Pro268 each contribute to the carbamoyl phosphate site.

This sequence belongs to the aspartate/ornithine carbamoyltransferase superfamily. ATCase family. Heterododecamer (2C3:3R2) of six catalytic PyrB chains organized as two trimers (C3), and six regulatory PyrI chains organized as three dimers (R2).

The enzyme catalyses carbamoyl phosphate + L-aspartate = N-carbamoyl-L-aspartate + phosphate + H(+). Its pathway is pyrimidine metabolism; UMP biosynthesis via de novo pathway; (S)-dihydroorotate from bicarbonate: step 2/3. Its function is as follows. Catalyzes the condensation of carbamoyl phosphate and aspartate to form carbamoyl aspartate and inorganic phosphate, the committed step in the de novo pyrimidine nucleotide biosynthesis pathway. This chain is Aspartate carbamoyltransferase catalytic subunit, found in Rhodococcus erythropolis (strain PR4 / NBRC 100887).